The following is a 563-amino-acid chain: Arginine--tRNA ligase (563 aa).

The 'HIGH' region motif lies at 121–131 (PNIAKPFSIGH).

This sequence belongs to the class-I aminoacyl-tRNA synthetase family. In terms of assembly, monomer.

The protein localises to the cytoplasm. The enzyme catalyses tRNA(Arg) + L-arginine + ATP = L-arginyl-tRNA(Arg) + AMP + diphosphate. In Streptococcus pyogenes serotype M49 (strain NZ131), this protein is Arginine--tRNA ligase.